Consider the following 215-residue polypeptide: Probable phosphoglycerate mutase GpmB (215 aa).

Substrate is bound by residues 8–15 (RHGETQWN), 21–22 (QG), R58, R60, 82–85 (ELNM), 104–105 (RR), and 151–152 (GI). Residue H9 is the Tele-phosphohistidine intermediate of the active site. E82 (proton donor/acceptor) is an active-site residue.

This sequence belongs to the phosphoglycerate mutase family. GpmB subfamily.

It carries out the reaction (2R)-2-phosphoglycerate = (2R)-3-phosphoglycerate. The protein operates within carbohydrate degradation; glycolysis; pyruvate from D-glyceraldehyde 3-phosphate: step 3/5. This is Probable phosphoglycerate mutase GpmB from Shigella boydii serotype 18 (strain CDC 3083-94 / BS512).